The chain runs to 500 residues: Na(+)/H(+) antiporter NhaB (500 aa).

12 helical membrane-spanning segments follow: residues 34 to 54, 62 to 82, 90 to 110, 129 to 149, 150 to 170, 205 to 225, 241 to 261, 311 to 331, 350 to 370, 394 to 414, 449 to 469, and 477 to 497; these read PLFFAVSPAAAGWCLVIEFIF, CYPLMPGGLLLVQALVLGMTT, LVHNFPVILLLMFMVAGIYFM, ALLGLLFCFLSAFLSAFLDAL, TVTAVIISAAVGFYSVYHRVA, LLMHGAVGTALGGVCTLVGEP, FFSKVAPVSMPVLAAGLVTCV, ILIVALALHVAEVGLIGLLVI, FKDAMPFTALLVVFFAVVAVI, MLFIANGLLSAISDNVFVATI, VATPNGQAAFLFLLTSAIAPL, and MVWMALPYTVVMGLLGWYAVS.

It belongs to the NhaB Na(+)/H(+) (TC 2.A.34) antiporter family.

The protein localises to the cell inner membrane. It catalyses the reaction 2 Na(+)(in) + 3 H(+)(out) = 2 Na(+)(out) + 3 H(+)(in). Functionally, na(+)/H(+) antiporter that extrudes sodium in exchange for external protons. The sequence is that of Na(+)/H(+) antiporter NhaB from Pseudomonas fluorescens (strain ATCC BAA-477 / NRRL B-23932 / Pf-5).